The chain runs to 490 residues: Probable cytosol aminopeptidase (490 aa).

Mn(2+)-binding residues include Lys260 and Asp265. The active site involves Lys272. Residues Asp284, Asp343, and Glu345 each coordinate Mn(2+). Arg347 is a catalytic residue.

This sequence belongs to the peptidase M17 family. Mn(2+) serves as cofactor.

The protein resides in the cytoplasm. The enzyme catalyses Release of an N-terminal amino acid, Xaa-|-Yaa-, in which Xaa is preferably Leu, but may be other amino acids including Pro although not Arg or Lys, and Yaa may be Pro. Amino acid amides and methyl esters are also readily hydrolyzed, but rates on arylamides are exceedingly low.. It carries out the reaction Release of an N-terminal amino acid, preferentially leucine, but not glutamic or aspartic acids.. Functionally, presumably involved in the processing and regular turnover of intracellular proteins. Catalyzes the removal of unsubstituted N-terminal amino acids from various peptides. This Gloeothece citriformis (strain PCC 7424) (Cyanothece sp. (strain PCC 7424)) protein is Probable cytosol aminopeptidase.